We begin with the raw amino-acid sequence, 95 residues long: Co-chaperonin GroES (95 aa).

This sequence belongs to the GroES chaperonin family. As to quaternary structure, heptamer of 7 subunits arranged in a ring. Interacts with the chaperonin GroEL.

The protein resides in the cytoplasm. Functionally, together with the chaperonin GroEL, plays an essential role in assisting protein folding. The GroEL-GroES system forms a nano-cage that allows encapsulation of the non-native substrate proteins and provides a physical environment optimized to promote and accelerate protein folding. GroES binds to the apical surface of the GroEL ring, thereby capping the opening of the GroEL channel. This Alkalilimnicola ehrlichii (strain ATCC BAA-1101 / DSM 17681 / MLHE-1) protein is Co-chaperonin GroES.